The primary structure comprises 442 residues: GTPase Der (442 aa).

EngA-type G domains lie at 3–167 (PTIV…PADD) and 177–350 (PRVA…AAAM). GTP-binding positions include 9-16 (GRPNVGKS), 56-60 (DTAGF), 119-122 (NKAE), 183-190 (GRPNVGKS), 230-234 (DTAGL), and 295-298 (NKWD). Residues 351 to 435 (SNLSTPRLTR…PLRIQFRTAH (85 aa)) form the KH-like domain.

Belongs to the TRAFAC class TrmE-Era-EngA-EngB-Septin-like GTPase superfamily. EngA (Der) GTPase family. In terms of assembly, associates with the 50S ribosomal subunit.

Functionally, GTPase that plays an essential role in the late steps of ribosome biogenesis. The polypeptide is GTPase Der (Azoarcus sp. (strain BH72)).